The sequence spans 274 residues: Putative homeobox protein Meis3-like 1 (274 aa).

Residues 12–65 (GGDVCSSDSFNEDNTAFAKQVRSERPFFSSNPELDNLMIQAIQVLRFHLLELEK) enclose the MEIS N-terminal domain. Disordered stretches follow at residues 108–167 (DSGS…KRGI) and 228–248 (NRTGQGAAFSPEGQPIGGYTE). The span at 123–135 (GLASQSGDNSSDQ) shows a compositional bias: polar residues. Positions 161 to 223 (RNKKRGIFPK…NARRRIVQPM (63 aa)) form a DNA-binding region, homeobox.

The protein belongs to the TALE/MEIS homeobox family.

The protein resides in the nucleus. The protein is Putative homeobox protein Meis3-like 1 (MEIS3P1) of Homo sapiens (Human).